The sequence spans 245 residues: rRNA adenine N-6-methyltransferase (245 aa).

S-adenosyl-L-methionine-binding residues include N10, L12, G37, E58, D83, and N100.

It belongs to the class I-like SAM-binding methyltransferase superfamily. rRNA adenine N(6)-methyltransferase family.

It carries out the reaction adenosine(2085) in 23S rRNA + 2 S-adenosyl-L-methionine = N(6)-dimethyladenosine(2085) in 23S rRNA + 2 S-adenosyl-L-homocysteine + 2 H(+). In terms of biological role, this protein produces a dimethylation of the adenine residue at position 2085 in 23S rRNA, resulting in reduced affinity between ribosomes and macrolide-lincosamide-streptogramin B antibiotics. The chain is rRNA adenine N-6-methyltransferase (ermBC) from Escherichia coli.